Consider the following 231-residue polypeptide: MSAQKLYASHVPLAPLSRMLLGIGSAVTAISDPKRGDMVAAMGETTAIGPVLENIRKRMESDVVGKRLLLEKPRISNGTIDRKWLRQLPDGTLGKLYSNFLDRLNTSPDARPTVKYIDNLEHLYVMQRYRETHDFTHIALEQKTNMLGEVTVKYFEGIQYGLPMCVTGGIFGGARLLTKNRQELVDRNLPWVVEQATNARFFMAFDWENHFEKQLSEVQKELNITPLSVNM.

Zn(2+)-binding residues include His133, Asp134, His137, and Glu149.

The protein belongs to the COQ4 family. Component of a multi-subunit COQ enzyme complex. Zn(2+) is required as a cofactor.

It is found in the mitochondrion inner membrane. The enzyme catalyses a 4-hydroxy-3-methoxy-5-(all-trans-polyprenyl)benzoate + H(+) = a 2-methoxy-6-(all-trans-polyprenyl)phenol + CO2. Its pathway is cofactor biosynthesis; ubiquinone biosynthesis. Lyase that catalyzes the C1-decarboxylation of 4-hydroxy-3-methoxy-5-(all-trans-polyprenyl)benzoic acid into 2-methoxy-6-(all-trans-polyprenyl)phenol during ubiquinone biosynthesis. This is Ubiquinone biosynthesis protein coq-4, mitochondrial from Caenorhabditis elegans.